The chain runs to 626 residues: DNA-directed RNA polymerase subunit gamma (626 aa).

The Zn(2+) site is built by C71, C73, C86, and C89. Mg(2+)-binding residues include D467, D469, and D471.

The protein belongs to the RNA polymerase beta' chain family. RpoC1 subfamily. As to quaternary structure, in cyanobacteria the RNAP catalytic core is composed of 2 alpha, 1 beta, 1 beta', 1 gamma and 1 omega subunit. When a sigma factor is associated with the core the holoenzyme is formed, which can initiate transcription. Mg(2+) serves as cofactor. The cofactor is Zn(2+).

The enzyme catalyses RNA(n) + a ribonucleoside 5'-triphosphate = RNA(n+1) + diphosphate. DNA-dependent RNA polymerase catalyzes the transcription of DNA into RNA using the four ribonucleoside triphosphates as substrates. The chain is DNA-directed RNA polymerase subunit gamma from Synechocystis sp. (strain ATCC 27184 / PCC 6803 / Kazusa).